The following is a 212-amino-acid chain: Floral homeotic protein PMADS 2 (212 aa).

The MADS-box domain maps to 3–58 (RGKIEIKRIENSSNRQVTYSKRRNGIIKKAKEITVLCDAKVSLIIFGNSGKMHEYC). In terms of domain architecture, K-box spans 84–170 (HENLSNEIDR…QYALHQKEMA (87 aa)).

In terms of tissue distribution, predominantly expressed in petals and stamens, less in carpels and sepals.

It localises to the nucleus. Its function is as follows. Transcription factor involved in the genetic control of flower development. In Petunia hybrida (Petunia), this protein is Floral homeotic protein PMADS 2 (PMADS2).